A 369-amino-acid chain; its full sequence is tRNA/tmRNA (uracil-C(5))-methyltransferase (369 aa).

S-adenosyl-L-methionine is bound by residues Gln-193, Tyr-221, Asn-226, Glu-242, and Asp-302. The Nucleophile role is filled by Cys-327. Residue Glu-361 is the Proton acceptor of the active site.

The protein belongs to the class I-like SAM-binding methyltransferase superfamily. RNA M5U methyltransferase family. TrmA subfamily.

The catalysed reaction is uridine(54) in tRNA + S-adenosyl-L-methionine = 5-methyluridine(54) in tRNA + S-adenosyl-L-homocysteine + H(+). It carries out the reaction uridine(341) in tmRNA + S-adenosyl-L-methionine = 5-methyluridine(341) in tmRNA + S-adenosyl-L-homocysteine + H(+). Dual-specificity methyltransferase that catalyzes the formation of 5-methyluridine at position 54 (m5U54) in all tRNAs, and that of position 341 (m5U341) in tmRNA (transfer-mRNA). The chain is tRNA/tmRNA (uracil-C(5))-methyltransferase from Sulfurimonas denitrificans (strain ATCC 33889 / DSM 1251) (Thiomicrospira denitrificans (strain ATCC 33889 / DSM 1251)).